The sequence spans 77 residues: Acyl carrier protein (77 aa).

A Carrier domain is found at 2–77; it reads SDIEQRVKNV…LAIDYVKSHQ (76 aa). S37 carries the post-translational modification O-(pantetheine 4'-phosphoryl)serine.

Belongs to the acyl carrier protein (ACP) family. 4'-phosphopantetheine is transferred from CoA to a specific serine of apo-ACP by AcpS. This modification is essential for activity because fatty acids are bound in thioester linkage to the sulfhydryl of the prosthetic group.

It localises to the cytoplasm. The protein operates within lipid metabolism; fatty acid biosynthesis. Functionally, carrier of the growing fatty acid chain in fatty acid biosynthesis. The polypeptide is Acyl carrier protein (Leucothrix mucor).